The primary structure comprises 67 residues: Conotoxin ArMLCL-012 (67 aa).

Positions 1 to 19 (MLCLPVFIILLLLASPAAS) are cleaved as a signal peptide. Positions 20–45 (NPLEKRIQSDLIRAALEDADTKNDPR) are excised as a propeptide. C64 carries the cysteine amide modification.

Belongs to the conotoxin T superfamily. In terms of processing, contains 2 disulfide bonds that can be either 'C1-C3, C2-C4' or 'C1-C4, C2-C3', since these disulfide connectivities have been observed for conotoxins with cysteine framework V (for examples, see AC P0DQQ7 and AC P81755). Expressed by the venom duct.

Its subcellular location is the secreted. This Conus arenatus (Sand-dusted cone) protein is Conotoxin ArMLCL-012.